A 447-amino-acid polypeptide reads, in one-letter code: Phosphoglucosamine mutase (447 aa).

The active-site Phosphoserine intermediate is Ser-107. Residues Ser-107, Asp-246, Asp-248, and Asp-250 each coordinate Mg(2+). Phosphoserine is present on Ser-107.

The protein belongs to the phosphohexose mutase family. Mg(2+) is required as a cofactor. Post-translationally, activated by phosphorylation.

The catalysed reaction is alpha-D-glucosamine 1-phosphate = D-glucosamine 6-phosphate. Functionally, catalyzes the conversion of glucosamine-6-phosphate to glucosamine-1-phosphate. The polypeptide is Phosphoglucosamine mutase (Ralstonia pickettii (strain 12J)).